Reading from the N-terminus, the 211-residue chain is Thiamine-phosphate synthase (211 aa).

4-amino-2-methyl-5-(diphosphooxymethyl)pyrimidine contacts are provided by residues 43-47 and Asn75; that span reads QLRDK. Mg(2+) is bound by residues Asp76 and Asp95. Ser114 is a 4-amino-2-methyl-5-(diphosphooxymethyl)pyrimidine binding site. Residue 140–142 coordinates 2-[(2R,5Z)-2-carboxy-4-methylthiazol-5(2H)-ylidene]ethyl phosphate; the sequence is TAS. Residue Lys143 coordinates 4-amino-2-methyl-5-(diphosphooxymethyl)pyrimidine. 2-[(2R,5Z)-2-carboxy-4-methylthiazol-5(2H)-ylidene]ethyl phosphate is bound by residues Gly170 and 190–191; that span reads IS.

It belongs to the thiamine-phosphate synthase family. Mg(2+) is required as a cofactor.

The catalysed reaction is 2-[(2R,5Z)-2-carboxy-4-methylthiazol-5(2H)-ylidene]ethyl phosphate + 4-amino-2-methyl-5-(diphosphooxymethyl)pyrimidine + 2 H(+) = thiamine phosphate + CO2 + diphosphate. It carries out the reaction 2-(2-carboxy-4-methylthiazol-5-yl)ethyl phosphate + 4-amino-2-methyl-5-(diphosphooxymethyl)pyrimidine + 2 H(+) = thiamine phosphate + CO2 + diphosphate. The enzyme catalyses 4-methyl-5-(2-phosphooxyethyl)-thiazole + 4-amino-2-methyl-5-(diphosphooxymethyl)pyrimidine + H(+) = thiamine phosphate + diphosphate. Its pathway is cofactor biosynthesis; thiamine diphosphate biosynthesis; thiamine phosphate from 4-amino-2-methyl-5-diphosphomethylpyrimidine and 4-methyl-5-(2-phosphoethyl)-thiazole: step 1/1. In terms of biological role, condenses 4-methyl-5-(beta-hydroxyethyl)thiazole monophosphate (THZ-P) and 2-methyl-4-amino-5-hydroxymethyl pyrimidine pyrophosphate (HMP-PP) to form thiamine monophosphate (TMP). In Coprothermobacter proteolyticus (strain ATCC 35245 / DSM 5265 / OCM 4 / BT), this protein is Thiamine-phosphate synthase.